The sequence spans 356 residues: Uroporphyrinogen decarboxylase (356 aa).

Substrate contacts are provided by residues 25 to 29 (RQAGR), Asp75, Tyr152, Thr207, and His326.

This sequence belongs to the uroporphyrinogen decarboxylase family. As to quaternary structure, homodimer.

It localises to the cytoplasm. It carries out the reaction uroporphyrinogen III + 4 H(+) = coproporphyrinogen III + 4 CO2. Its pathway is porphyrin-containing compound metabolism; protoporphyrin-IX biosynthesis; coproporphyrinogen-III from 5-aminolevulinate: step 4/4. Functionally, catalyzes the decarboxylation of four acetate groups of uroporphyrinogen-III to yield coproporphyrinogen-III. The chain is Uroporphyrinogen decarboxylase from Magnetococcus marinus (strain ATCC BAA-1437 / JCM 17883 / MC-1).